A 372-amino-acid chain; its full sequence is Flap endonuclease 1 (372 aa).

The segment at 1 to 105 (MGVKGLNQLI…GELEKRLLRR (105 aa)) is N-domain. Asp-34 contributes to the Mg(2+) binding site. The DNA site is built by Arg-47 and Arg-71. Mg(2+)-binding residues include Asp-87, Glu-159, Glu-161, Asp-180, and Asp-182. The interval 123–254 (EVLKFEKRLV…ATAFKLIKEH (132 aa)) is I-domain. DNA is bound at residue Glu-159. Positions 232 and 234 each coordinate DNA. Asp-234 contacts Mg(2+). The interaction with PCNA stretch occupies residues 339–347 (VQGRLDGFF).

It belongs to the XPG/RAD2 endonuclease family. FEN1 subfamily. In terms of assembly, interacts with PCNA. Three molecules of RAD27 bind to one PCNA trimer with each molecule binding to one PCNA monomer. PCNA stimulates the nuclease activity without altering cleavage specificity. Requires Mg(2+) as cofactor. Phosphorylated. Phosphorylation upon DNA damage induces relocalization to the nuclear plasma.

The protein resides in the nucleus. It localises to the nucleolus. Its subcellular location is the nucleoplasm. The protein localises to the mitochondrion. Functionally, structure-specific nuclease with 5'-flap endonuclease and 5'-3' exonuclease activities involved in DNA replication and repair. During DNA replication, cleaves the 5'-overhanging flap structure that is generated by displacement synthesis when DNA polymerase encounters the 5'-end of a downstream Okazaki fragment. It enters the flap from the 5'-end and then tracks to cleave the flap base, leaving a nick for ligation. Also involved in the long patch base excision repair (LP-BER) pathway, by cleaving within the apurinic/apyrimidinic (AP) site-terminated flap. Acts as a genome stabilization factor that prevents flaps from equilibrating into structures that lead to duplications and deletions. Also possesses 5'-3' exonuclease activity on nicked or gapped double-stranded DNA, and exhibits RNase H activity. Also involved in replication and repair of rDNA and in repairing mitochondrial DNA. This is Flap endonuclease 1 from Candida dubliniensis (strain CD36 / ATCC MYA-646 / CBS 7987 / NCPF 3949 / NRRL Y-17841) (Yeast).